The following is a 410-amino-acid chain: Phosphoglycerate kinase (410 aa).

Substrate is bound by residues 24–26, Arg-40, 63–66, Arg-122, and Arg-162; these read DLN and HLGR. ATP-binding positions include Lys-212, Gly-300, Glu-331, and 360-363; that span reads GGDS.

The protein belongs to the phosphoglycerate kinase family. As to quaternary structure, monomer.

It localises to the cytoplasm. The catalysed reaction is (2R)-3-phosphoglycerate + ATP = (2R)-3-phospho-glyceroyl phosphate + ADP. It participates in carbohydrate degradation; glycolysis; pyruvate from D-glyceraldehyde 3-phosphate: step 2/5. The chain is Phosphoglycerate kinase from Nocardia farcinica (strain IFM 10152).